The primary structure comprises 266 residues: Dihydropteroate synthase (266 aa).

Residues A12–A260 form the Pterin-binding domain. N19 is a binding site for Mg(2+). (7,8-dihydropterin-6-yl)methyl diphosphate-binding positions include T59, D93, N112, D176, K212, and R248 to H250.

The protein belongs to the DHPS family. Homodimer or homotrimer. Mg(2+) serves as cofactor.

It carries out the reaction (7,8-dihydropterin-6-yl)methyl diphosphate + 4-aminobenzoate = 7,8-dihydropteroate + diphosphate. It functions in the pathway cofactor biosynthesis; tetrahydrofolate biosynthesis; 7,8-dihydrofolate from 2-amino-4-hydroxy-6-hydroxymethyl-7,8-dihydropteridine diphosphate and 4-aminobenzoate: step 1/2. Its function is as follows. Catalyzes the condensation of para-aminobenzoate (pABA) with 6-hydroxymethyl-7,8-dihydropterin diphosphate (DHPt-PP) to form 7,8-dihydropteroate (H2Pte), the immediate precursor of folate derivatives. The sequence is that of Dihydropteroate synthase (folP) from Streptococcus pyogenes serotype M18 (strain MGAS8232).